We begin with the raw amino-acid sequence, 259 residues long: Small ribosomal subunit protein eS1 (259 aa).

It belongs to the eukaryotic ribosomal protein eS1 family. As to quaternary structure, component of the small ribosomal subunit. Mature ribosomes consist of a small (40S) and a large (60S) subunit. The 40S subunit contains about 33 different proteins and 1 molecule of RNA (18S). The 60S subunit contains about 49 different proteins and 3 molecules of RNA (25S, 5.8S and 5S).

It is found in the cytoplasm. The sequence is that of Small ribosomal subunit protein eS1 from Monosiga brevicollis (Choanoflagellate).